The chain runs to 163 residues: Nucleotide-binding protein HS_0688 (163 aa).

This sequence belongs to the YajQ family.

In terms of biological role, nucleotide-binding protein. The protein is Nucleotide-binding protein HS_0688 of Histophilus somni (strain 129Pt) (Haemophilus somnus).